The primary structure comprises 922 residues: Alpha-actinin, sarcomeric (922 aa).

Residues 1–252 (MMENGGYVGQ…IMTYVSCYYH (252 aa)) form an actin-binding region. 2 consecutive Calponin-homology (CH) domains span residues 36-140 (KQQK…LRFA) and 149-255 (MTAK…HAFQ). 4 Spectrin repeats span residues 253–393 (AFQG…MVSD), 394–508 (ITNS…RCQR), 509–629 (ICDQ…SADL), and 630–742 (ISRK…TMET). 2 EF-hand domains span residues 776-811 (EQLTEFRSSFNHFDKNRTGRLAPEEFKSCLVSLGYS) and 817-852 (QGDMDFQRILAVVDPNASGYVQFDAFLDFMTRESTD). 5 residues coordinate Ca(2+): Asp-789, Asn-791, Thr-793, Arg-795, and Glu-800.

It belongs to the alpha-actinin family. Homodimer; antiparallel.

In terms of biological role, F-actin cross-linking protein which is thought to anchor actin to a variety of intracellular structures. This is a bundling protein. This chain is Alpha-actinin, sarcomeric (Actn), found in Anopheles gambiae (African malaria mosquito).